The following is a 320-amino-acid chain: MTNIRVAIVGYGNLGRSVEKLIAKQPDMDLVGIFSRRATLDTKTPVFDVADVDKHADDVDVLFLCMGSATDIPEQAPKFAQFACTVDTYDNHRDIPRHRQVMNEAATAAGNVALVSTGWDPGMFSINRVYAAAVLAEHQQHTFWGPGLSQGHSDALRRIPGVQKAVQYTLPSEDALEKARRGEAGDLTGKQTHKRQCFVVADAADHERIENDIRTMPDYFVGYEVEVNFIDEATFDSEHTGMPHGGHVITTGDTGGFNHTVEYILKLDRNPDFTASSQIAFGRAAHRMKQQGQSGAFTVLEVAPYLLSPENLDDLIARDV.

Residues Tyr-11–Leu-14, Ser-35–Arg-37, Cys-65–Ser-68, Thr-88–Asp-90, and Thr-117–Pro-121 each bind NADP(+). Residues Asp-90, Asp-120, Trp-144, Gln-150–Gly-151, Thr-169, Arg-195, His-244, and Asn-270 contribute to the substrate site.

As to quaternary structure, homodimer.

The enzyme catalyses meso-2,6-diaminopimelate + NADP(+) + H2O = (S)-2-amino-6-oxoheptanedioate + NH4(+) + NADPH + H(+). It participates in amino-acid biosynthesis; L-lysine biosynthesis via DAP pathway; DL-2,6-diaminopimelate from (S)-tetrahydrodipicolinate: step 1/1. Its activity is regulated as follows. L,L-2,6-diaminopimelate and D,D-2,6-diaminopimelate competitively inhibit the oxidative deamination of meso-2,6-diaminopimelate. The enzyme is also inhibited by L-cysteine, and by p-chloromercuribenzoate, iodoacetic acid and HgCl(2) in vitro. In terms of biological role, catalyzes the reversible NADPH-dependent reductive amination of L-2-amino-6-oxopimelate, the acyclic form of L-tetrahydrodipicolinate, to generate the meso compound, D,L-2,6-diaminopimelate. Probably plays a role in lysine biosynthesis. Exhibits a high substrate specificity for meso-2,6-diaminopimelate, since L,L-2,6-diaminopimelate, D,D-2,6-diaminopimelate, L-glutamate, L-alanine, L-leucine, L-valine, L-aspartate, L-threonine, L-homoserine, L-methionine, L-lysine, L-serine, L-phenylalanine, L-tyrosine, L-tryptophan, L-ornithine, L-histidine, L-arginine, D-glutamate, and D-alanine are not substrates for the oxidative deamination reaction. Can use NAD(+) only poorly since the activity observed in the presence of NAD(+) is about 3% of that with NADP(+). The chain is Meso-diaminopimelate D-dehydrogenase (ddh) from Corynebacterium glutamicum (strain ATCC 13032 / DSM 20300 / JCM 1318 / BCRC 11384 / CCUG 27702 / LMG 3730 / NBRC 12168 / NCIMB 10025 / NRRL B-2784 / 534).